Reading from the N-terminus, the 533-residue chain is RNA end formation protein 2 (533 aa).

3 disordered regions span residues 187–254, 260–279, and 321–344; these read SNST…SSMK, LFNKNEAKSTESLPTSSKKK, and SSSTSGSSTTTVATPASSEEPLKK. A compositionally biased stretch (basic and acidic residues) spans 206-222; the sequence is KIKDSEKEKEKEKDKSK. The span at 242-252 shows a compositional bias: low complexity; the sequence is SSPSPTASTSS. Low complexity predominate over residues 321–338; the sequence is SSSTSGSSTTTVATPASS.

As to quaternary structure, interacts with FIR1. Component of the cleavage and polyadenylation factor (CPF) complex, which is composed of PTI1, SYC1, SSU72, GLC7, MPE1, REF2, PFS2, PTA1, YSH1/BRR5, SWD2, CFT2/YDH1, YTH1, CFT1/YHH1, FIP1 and PAP1. Component of the APT complex, which is a subcomplex of CPF, and is composed of PTI1, SYC1, SSU72, GLC7, REF2, PTA1 and SWD2.

The protein resides in the nucleus. RNA-binding component of the cleavage and polyadenylation factor (CPF) complex, which plays a key role in polyadenylation-dependent pre-mRNA 3'-end formation and cooperates with cleavage factors including the CFIA complex and NAB4/CFIB. Negative regulator of poly(A) synthesis. Component of the APT complex, which may be involved in polyadenylation-independent transcript 3'-end formation. REF2 is required for 3'-end formation of snoRNAs. In Saccharomyces cerevisiae (strain ATCC 204508 / S288c) (Baker's yeast), this protein is RNA end formation protein 2 (REF2).